The primary structure comprises 152 residues: Transcriptional repressor NrdR (152 aa).

Positions 1-10 (MKCPSCQHNG) are enriched in polar residues. The disordered stretch occupies residues 1-21 (MKCPSCQHNGSRVLDSRPADE). A zinc finger lies at 3–34 (CPSCQHNGSRVLDSRPADEGKSIRRRRECEAC). The region spanning 49–139 (LIVVKKEGVR…VYRQFKDINV (91 aa)) is the ATP-cone domain.

The protein belongs to the NrdR family. It depends on Zn(2+) as a cofactor.

Negatively regulates transcription of bacterial ribonucleotide reductase nrd genes and operons by binding to NrdR-boxes. In Bacillus velezensis (strain DSM 23117 / BGSC 10A6 / LMG 26770 / FZB42) (Bacillus amyloliquefaciens subsp. plantarum), this protein is Transcriptional repressor NrdR.